A 351-amino-acid chain; its full sequence is Small ribosomal subunit protein uS2 (351 aa).

Residues Q302–N351 are disordered. A compositionally biased stretch (basic and acidic residues) spans T340–N351.

This sequence belongs to the universal ribosomal protein uS2 family.

The protein is Small ribosomal subunit protein uS2 of Ureaplasma urealyticum serovar 10 (strain ATCC 33699 / Western).